We begin with the raw amino-acid sequence, 442 residues long: tRNA-2-methylthio-N(6)-dimethylallyladenosine synthase (442 aa).

Residues 3 to 120 (KKLYIETHGC…LPEMIDAARI (118 aa)) form the MTTase N-terminal domain. [4Fe-4S] cluster-binding residues include Cys-12, Cys-49, Cys-83, Cys-157, Cys-161, and Cys-164. The Radical SAM core domain occupies 143-375 (RVDGPSAYVS…QHRLNQQGFE (233 aa)). The TRAM domain occupies 378 to 442 (RQMVGSIQRI…PHSLRGSLLQ (65 aa)).

It belongs to the methylthiotransferase family. MiaB subfamily. Monomer. Requires [4Fe-4S] cluster as cofactor.

The protein resides in the cytoplasm. It carries out the reaction N(6)-dimethylallyladenosine(37) in tRNA + (sulfur carrier)-SH + AH2 + 2 S-adenosyl-L-methionine = 2-methylsulfanyl-N(6)-dimethylallyladenosine(37) in tRNA + (sulfur carrier)-H + 5'-deoxyadenosine + L-methionine + A + S-adenosyl-L-homocysteine + 2 H(+). Its function is as follows. Catalyzes the methylthiolation of N6-(dimethylallyl)adenosine (i(6)A), leading to the formation of 2-methylthio-N6-(dimethylallyl)adenosine (ms(2)i(6)A) at position 37 in tRNAs that read codons beginning with uridine. The polypeptide is tRNA-2-methylthio-N(6)-dimethylallyladenosine synthase (Pseudomonas savastanoi pv. phaseolicola (strain 1448A / Race 6) (Pseudomonas syringae pv. phaseolicola (strain 1448A / Race 6))).